A 338-amino-acid polypeptide reads, in one-letter code: Ribosomal RNA small subunit methyltransferase H (338 aa).

S-adenosyl-L-methionine contacts are provided by residues 53–55, aspartate 72, tyrosine 99, aspartate 123, and glutamine 130; that span reads GGH. The interval 277-298 is disordered; it reads ITPRSKSKSPEGLPVELPGMGP.

This sequence belongs to the methyltransferase superfamily. RsmH family.

Its subcellular location is the cytoplasm. It carries out the reaction cytidine(1402) in 16S rRNA + S-adenosyl-L-methionine = N(4)-methylcytidine(1402) in 16S rRNA + S-adenosyl-L-homocysteine + H(+). Functionally, specifically methylates the N4 position of cytidine in position 1402 (C1402) of 16S rRNA. The sequence is that of Ribosomal RNA small subunit methyltransferase H from Rhodococcus opacus (strain B4).